A 365-amino-acid polypeptide reads, in one-letter code: Protein RecA (365 aa).

69-76 (GPESSGKT) provides a ligand contact to ATP. Residues 344 to 365 (LDDNPDTDDHDVEDIDENTDEE) form a disordered region. The segment covering 347-365 (NPDTDDHDVEDIDENTDEE) has biased composition (acidic residues).

It belongs to the RecA family.

Its subcellular location is the cytoplasm. Functionally, can catalyze the hydrolysis of ATP in the presence of single-stranded DNA, the ATP-dependent uptake of single-stranded DNA by duplex DNA, and the ATP-dependent hybridization of homologous single-stranded DNAs. It interacts with LexA causing its activation and leading to its autocatalytic cleavage. This Arthrospira platensis (Spirulina platensis) protein is Protein RecA.